The primary structure comprises 1365 residues: ATP-dependent RNA helicase DHX29 (1365 aa).

Residues 1–10 show a composition bias toward basic residues; it reads MGGKNKKHKA. Disordered stretches follow at residues 1-74, 174-222, and 235-257; these read MGGK…NDSG, SQEF…EETT, and AEQQ…EKFD. 2 stretches are compositionally biased toward low complexity: residues 11–36 and 43–53; these read PGAA…VGEA and ARPAPAVPTGA. Residues serine 69, serine 190, and serine 198 each carry the phosphoserine modification. Polar residues predominate over residues 187–203; it reads KFQSVQIQATLSPPQQT. Over residues 206–222 the composition is skewed to basic and acidic residues; that stretch reads KRQEEDPKIKPKKEETT. Positions 281 to 308 form a coiled coil; that stretch reads LEKNKQGQKEAQEKIRKFQREMETLEDH. The disordered stretch occupies residues 500–524; the sequence is QQQQQQQQRPESEKGGSEDPEESWE. One can recognise a Helicase ATP-binding domain in the interval 581–754; it reads VETLKRHRVV…FTHCPILRIS (174 aa). 594 to 601 contributes to the ATP binding site; the sequence is GETGSGKS. The DEAH box motif lies at 701 to 704; it reads DEVH. A Helicase C-terminal domain is found at 848 to 1025; sequence LILELLVYLD…ELCLHIMKCD (178 aa).

It belongs to the DEAD box helicase family. DEAH subfamily. Part of the 43S pre-initiation complex (PIC) that contains at least Met-tRNA, EIF1, EIF1A (EIF1AX or EIF1AY), EIF2S1, EIF2S2, EIF2S3, EIF3A, EIF3B, EIF3C, EIF3D, EIF3E, EIF3F, EIF3G, EIF3H, EIF3I, EIF3J, EIF3K, EIF3L, EIF3M, DHX29 and the 40S ribosomal subunit.

The protein localises to the cytoplasm. It carries out the reaction ATP + H2O = ADP + phosphate + H(+). ATP-binding RNA helicase involved in translation initiation. Part of the 43S pre-initiation complex that is required for efficient initiation on mRNAs of higher eukaryotes with structured 5'-UTRs by promoting efficient NTPase-dependent 48S complex formation. Specifically binds to the 40S ribosome near the mRNA entrance. Does not possess a processive helicase activity. The polypeptide is ATP-dependent RNA helicase DHX29 (Mus musculus (Mouse)).